The sequence spans 336 residues: Cell division protein ZipA (336 aa).

Residues 1 to 6 (MMQDLR) lie on the Periplasmic side of the membrane. A helical membrane pass occupies residues 7-27 (LILIVVGAIAIIALLLHGLWT). Residues 28–336 (SRKERSSLFR…RIRDVLKANA (309 aa)) are Cytoplasmic-facing. The segment covering 40-51 (PVKRAKKARDET) has biased composition (basic and acidic residues). The tract at residues 40–190 (PVKRAKKARD…APAQPQQPAE (151 aa)) is disordered. Residues 76–89 (SFSSSSFDNASFDN) show a composition bias toward low complexity. Polar residues predominate over residues 126 to 138 (PRSQVRGDSNPQV). Residues 179–190 (QPAPAQPQQPAE) are compositionally biased toward low complexity.

The protein belongs to the ZipA family. As to quaternary structure, interacts with FtsZ via their C-terminal domains.

It localises to the cell inner membrane. Functionally, essential cell division protein that stabilizes the FtsZ protofilaments by cross-linking them and that serves as a cytoplasmic membrane anchor for the Z ring. Also required for the recruitment to the septal ring of downstream cell division proteins. This Pectobacterium carotovorum subsp. carotovorum (strain PC1) protein is Cell division protein ZipA.